Reading from the N-terminus, the 458-residue chain is Phosphoglucosamine mutase (458 aa).

S106 (phosphoserine intermediate) is an active-site residue. Mg(2+)-binding residues include S106, D247, D249, and D251. Position 106 is a phosphoserine (S106).

Belongs to the phosphohexose mutase family. Mg(2+) is required as a cofactor. Post-translationally, activated by phosphorylation.

It carries out the reaction alpha-D-glucosamine 1-phosphate = D-glucosamine 6-phosphate. Its function is as follows. Catalyzes the conversion of glucosamine-6-phosphate to glucosamine-1-phosphate. This chain is Phosphoglucosamine mutase, found in Chlamydia abortus (strain DSM 27085 / S26/3) (Chlamydophila abortus).